The following is a 228-amino-acid chain: Cytokinin riboside 5'-monophosphate phosphoribohydrolase LOG5 (228 aa).

Substrate-binding positions include E79, 97–98 (RK), and 114–120 (GYGTLEE).

This sequence belongs to the LOG family. As to expression, expressed in roots and shoots. Detected in vascular tissues of roots, cotyledons, and leaves, axillary buds, immature and mature flowers, fruit abscission zones and ovules.

It is found in the cytoplasm. The protein localises to the nucleus. It carries out the reaction N(6)-(dimethylallyl)adenosine 5'-phosphate + H2O = N(6)-dimethylallyladenine + D-ribose 5-phosphate. The catalysed reaction is 9-ribosyl-trans-zeatin 5'-phosphate + H2O = trans-zeatin + D-ribose 5-phosphate. In terms of biological role, cytokinin-activating enzyme working in the direct activation pathway. Phosphoribohydrolase that converts inactive cytokinin nucleotides to the biologically active free-base forms. The polypeptide is Cytokinin riboside 5'-monophosphate phosphoribohydrolase LOG5 (LOG5) (Arabidopsis thaliana (Mouse-ear cress)).